Consider the following 306-residue polypeptide: Armadillo repeat-containing protein 10 (306 aa).

The chain crosses the membrane as a helical span at residues 7-29 (VGWVAAGLVLGAGACYCIYRLTR). Serine 43 bears the Phosphoserine mark. Phosphothreonine is present on threonine 48. One copy of the ARM repeat lies at 101–143 (GGIPIVGSKINSLNQSIKEKALNALNNLSVNVENQTKIKIYVR).

As to quaternary structure, interacts with the DNA-binding domain of p53/TP53.

Its subcellular location is the endoplasmic reticulum membrane. It is found in the mitochondrion outer membrane. In terms of biological role, may play a role in cell survival and cell growth. May suppress the transcriptional activity of p53/TP53. In Rattus norvegicus (Rat), this protein is Armadillo repeat-containing protein 10 (Armc10).